Here is a 421-residue protein sequence, read N- to C-terminus: C2H2 type master regulator of conidiophore development brlA (421 aa).

The span at 228–242 (THSPTTPLRSCSIGT) shows a compositional bias: polar residues. The segment at 228-247 (THSPTTPLRSCSIGTASGPD) is disordered. C2H2-type zinc fingers lie at residues 309–333 (FKCKEPGCKGRFKRQEHLKRHMKSH) and 339–364 (HVCWVPGCERAFSRSDNLNAHYTKTH). Residues 361 to 370 (TKTHSKRGGR) show a composition bias toward basic residues. Residues 361–421 (TKTHSKRGGR…REYSVDGLDD (61 aa)) are disordered.

The protein localises to the nucleus. Its function is as follows. BrlA, abaA and wetA are pivotal regulators of conidiophore development and conidium maturation. They act individually and together to regulate their own expression and that of numerous other sporulation-specific genes. Binds promoters of target genes at brlA response elements (BREs) containing the conserved sequence 5'-(C/A)(A/G)AGGG(G/A)-3'. This chain is C2H2 type master regulator of conidiophore development brlA, found in Aspergillus parasiticus (strain ATCC 56775 / NRRL 5862 / SRRC 143 / SU-1).